We begin with the raw amino-acid sequence, 331 residues long: Tetraacyldisaccharide 4'-kinase (331 aa).

ATP is bound at residue 51–58 (TAGGAGKT).

It belongs to the LpxK family.

The enzyme catalyses a lipid A disaccharide + ATP = a lipid IVA + ADP + H(+). It functions in the pathway glycolipid biosynthesis; lipid IV(A) biosynthesis; lipid IV(A) from (3R)-3-hydroxytetradecanoyl-[acyl-carrier-protein] and UDP-N-acetyl-alpha-D-glucosamine: step 6/6. Functionally, transfers the gamma-phosphate of ATP to the 4'-position of a tetraacyldisaccharide 1-phosphate intermediate (termed DS-1-P) to form tetraacyldisaccharide 1,4'-bis-phosphate (lipid IVA). In Rhodospirillum rubrum (strain ATCC 11170 / ATH 1.1.1 / DSM 467 / LMG 4362 / NCIMB 8255 / S1), this protein is Tetraacyldisaccharide 4'-kinase.